Here is a 206-residue protein sequence, read N- to C-terminus: Protein GET1 (206 aa).

The Lumenal portion of the chain corresponds to 1 to 4 (MPSL). The helical transmembrane segment at 5 to 24 (LITALFLNVIIYVINTVGAA) threads the bilayer. Topologically, residues 25 to 110 (TVDGLLWLLY…TFDITIKIAR (86 aa)) are cytoplasmic. Residues 75–100 (AKLRRRHDKALEAYEAKNNELTQSKS) are a coiled coil. Residues 111–131 (WAATSGLMLFLQFWYSKTPIF) traverse the membrane as a helical segment. Residues 132 to 155 (TLPPGWIPWQVQWVLSFPRAPMGT) lie on the Lumenal side of the membrane. The helical transmembrane segment at 156–172 (VSIQIWSGACATVVALV) threads the bilayer. Residues 173-206 (GDAMKASLAYVSKPKIDRIKLGATMEGKEGKKRQ) lie on the Cytoplasmic side of the membrane.

This sequence belongs to the WRB/GET1 family. Interacts with GET3.

It is found in the endoplasmic reticulum membrane. In terms of biological role, required for the post-translational delivery of tail-anchored (TA) proteins to the endoplasmic reticulum. Acts as a membrane receptor for soluble GET3, which recognizes and selectively binds the transmembrane domain of TA proteins in the cytosol. The chain is Protein GET1 from Ajellomyces capsulatus (strain H143) (Darling's disease fungus).